The primary structure comprises 297 residues: Heme A synthase (297 aa).

The Cytoplasmic portion of the chain corresponds to 1–6; that stretch reads MNRKLS. A helical membrane pass occupies residues 7–27; sequence IFSAFVTFTMMIVLLMGGTVT. The Extracellular portion of the chain corresponds to 28–62; the sequence is KTDSGNGCGTDWPLCHGELIPTNPSVETMIEYSHR. A disulfide bridge connects residues cysteine 35 and cysteine 42. Glutamate 58 is a catalytic residue. Histidine 61 is a binding site for heme o. A helical membrane pass occupies residues 63–83; the sequence is AVTGVVGLLIIALCLWTLVAF. At 84–90 the chain is on the cytoplasmic side; it reads KDRLDIK. A helical transmembrane segment spans residues 91 to 111; sequence IFAFLAFIFMLIQSIVGAGAV. Over 112–121 the chain is Extracellular; it reads VWQQSDLVMA. A helical transmembrane segment spans residues 122–142; it reads LHFGISLISFASLLILTILIM. Heme o is bound at residue histidine 123. Residues 143–160 are Cytoplasmic-facing; that stretch reads ERSGQEFRESVPAFLRKL. Residues 161 to 181 traverse the membrane as a helical segment; sequence LYGLLIYTLIVVYTGAFVRHV. At 182-201 the chain is on the extracellular side; it reads GATYACVGWPVCSQPTMTFE. Cysteine 187 and cysteine 193 form a disulfide bridge. Residues 202–222 form a helical membrane-spanning segment; sequence AWVQMIHRILAGLLFFYTLFV. Heme b is bound at residue histidine 208. The Cytoplasmic segment spans residues 223–236; that stretch reads HYTAIRLKHRTSRT. A helical transmembrane segment spans residues 237–257; that stretch reads GMLFATFFISCQVATGAWIVL. Residues 258-262 are Extracellular-facing; that stretch reads GGHAT. A helical transmembrane segment spans residues 263 to 283; that stretch reads YVPLLHAFLITCYFGVISYLA. Histidine 268 is a binding site for heme b. Residues 284–297 lie on the Cytoplasmic side of the membrane; the sequence is YHAFRTRKKDSRLR.

This sequence belongs to the COX15/CtaA family. Type 1 subfamily. Interacts with CtaB. It depends on heme b as a cofactor.

It localises to the cell membrane. The enzyme catalyses Fe(II)-heme o + 2 A + H2O = Fe(II)-heme a + 2 AH2. The protein operates within porphyrin-containing compound metabolism; heme A biosynthesis; heme A from heme O: step 1/1. Functionally, catalyzes the conversion of heme O to heme A by two successive hydroxylations of the methyl group at C8. The first hydroxylation forms heme I, the second hydroxylation results in an unstable dihydroxymethyl group, which spontaneously dehydrates, resulting in the formyl group of heme A. This is Heme A synthase from Exiguobacterium sibiricum (strain DSM 17290 / CCUG 55495 / CIP 109462 / JCM 13490 / 255-15).